The sequence spans 464 residues: tRNA-2-methylthio-N(6)-dimethylallyladenosine synthase (464 aa).

An MTTase N-terminal domain is found at 19–135; it reads GSYWITTFGC…LENLLGKVDL (117 aa). Residues Cys28, Cys64, Cys98, Cys170, Cys174, and Cys177 each coordinate [4Fe-4S] cluster. The region spanning 156–394 is the Radical SAM core domain; it reads RESSICGWVN…DLVEKTARSR (239 aa). A TRAM domain is found at 396 to 464; sequence KRYINNIESV…PFSLTGELYL (69 aa).

Belongs to the methylthiotransferase family. MiaB subfamily. As to quaternary structure, monomer. [4Fe-4S] cluster is required as a cofactor.

It localises to the cytoplasm. The enzyme catalyses N(6)-dimethylallyladenosine(37) in tRNA + (sulfur carrier)-SH + AH2 + 2 S-adenosyl-L-methionine = 2-methylsulfanyl-N(6)-dimethylallyladenosine(37) in tRNA + (sulfur carrier)-H + 5'-deoxyadenosine + L-methionine + A + S-adenosyl-L-homocysteine + 2 H(+). Catalyzes the methylthiolation of N6-(dimethylallyl)adenosine (i(6)A), leading to the formation of 2-methylthio-N6-(dimethylallyl)adenosine (ms(2)i(6)A) at position 37 in tRNAs that read codons beginning with uridine. The sequence is that of tRNA-2-methylthio-N(6)-dimethylallyladenosine synthase from Prochlorococcus marinus (strain AS9601).